Consider the following 591-residue polypeptide: tRNA 5-methylaminomethyl-2-thiouridine biosynthesis bifunctional protein MnmC (591 aa).

Residues 1 to 232 form a tRNA (mnm(5)s(2)U34)-methyltransferase region; sequence MTPTAPSPLV…KRERLEAWRP (232 aa). Residues 247 to 591 are FAD-dependent cmnm(5)s(2)U34 oxidoreductase; sequence IGGGIAGAAL…FDSPVTRSRL (345 aa).

It in the N-terminal section; belongs to the methyltransferase superfamily. tRNA (mnm(5)s(2)U34)-methyltransferase family. The protein in the C-terminal section; belongs to the DAO family. Requires FAD as cofactor.

Its subcellular location is the cytoplasm. It catalyses the reaction 5-aminomethyl-2-thiouridine(34) in tRNA + S-adenosyl-L-methionine = 5-methylaminomethyl-2-thiouridine(34) in tRNA + S-adenosyl-L-homocysteine + H(+). Its function is as follows. Catalyzes the last two steps in the biosynthesis of 5-methylaminomethyl-2-thiouridine (mnm(5)s(2)U) at the wobble position (U34) in tRNA. Catalyzes the FAD-dependent demodification of cmnm(5)s(2)U34 to nm(5)s(2)U34, followed by the transfer of a methyl group from S-adenosyl-L-methionine to nm(5)s(2)U34, to form mnm(5)s(2)U34. The sequence is that of tRNA 5-methylaminomethyl-2-thiouridine biosynthesis bifunctional protein MnmC from Caulobacter vibrioides (strain ATCC 19089 / CIP 103742 / CB 15) (Caulobacter crescentus).